The sequence spans 651 residues: Threonine--tRNA ligase (651 aa).

Residues 1–61 (MIKITFPDNS…NDDATVKLLK (61 aa)) enclose the TGS domain. Residues 242–541 (DHRKIGKEMD…LIEHTAGKFP (300 aa)) form a catalytic region. 3 residues coordinate Zn(2+): Cys337, His388, and His518.

This sequence belongs to the class-II aminoacyl-tRNA synthetase family. Homodimer. Zn(2+) serves as cofactor.

Its subcellular location is the cytoplasm. The enzyme catalyses tRNA(Thr) + L-threonine + ATP = L-threonyl-tRNA(Thr) + AMP + diphosphate + H(+). Its function is as follows. Catalyzes the attachment of threonine to tRNA(Thr) in a two-step reaction: L-threonine is first activated by ATP to form Thr-AMP and then transferred to the acceptor end of tRNA(Thr). Also edits incorrectly charged L-seryl-tRNA(Thr). This chain is Threonine--tRNA ligase, found in Parabacteroides distasonis (strain ATCC 8503 / DSM 20701 / CIP 104284 / JCM 5825 / NCTC 11152).